The chain runs to 258 residues: Acetylglutamate kinase (258 aa).

Substrate contacts are provided by residues 41–42 (GG), arginine 63, and asparagine 156.

The protein belongs to the acetylglutamate kinase family. ArgB subfamily.

It localises to the cytoplasm. It carries out the reaction N-acetyl-L-glutamate + ATP = N-acetyl-L-glutamyl 5-phosphate + ADP. It participates in amino-acid biosynthesis; L-arginine biosynthesis; N(2)-acetyl-L-ornithine from L-glutamate: step 2/4. In terms of biological role, catalyzes the ATP-dependent phosphorylation of N-acetyl-L-glutamate. The polypeptide is Acetylglutamate kinase (Bacillus amyloliquefaciens (Bacillus velezensis)).